A 599-amino-acid polypeptide reads, in one-letter code: MAKEIILGIDLGTTNSVVSIIENKKPVVLENFNGKRTTPSVVAFKNGEIQVGEIAKRQLETNPDTIASIKRLMGTTKTVKANGKTYKPEEISAMILSHLKEYAEKKVGKKLTKAVITVPAYFDNSQREATKIAGKIAGLDVLRIINEPTAAALSFGLDKKEKEMKVLVYDLGGGTFDVSVLELENGTFEVLSTSGDNHLGGDDWDHVIVEWLTKEIKNRYDFDPSKDKMVMTRLKEAAEKAKIDLSAQMVAQITLPFLSVTSKGPINVDLELKRSEFEKMTTHLVDRTRKPIEDALREAKIKASDLSEVLLVGGSTRIPAVQSMVEHVLGKKPNRSINPDEVVAIGAAIQGGVLAGDINDVLLLDVTPLTLGIETLGGVATPLIPRNTTIPVTKSQVFSTAADNQSEVTISVVQGERPMASDNKQLGQFNLSGIEPAPRGVPQIEVSFSIDVNGITTVKAKDLKTNKEQEITIKNSSKLSDEEVEKMVKEAEENREADKAKKEKVEVIVRAESLISQLEKSLVDQGDKVDAKAKEETQKQIQELKDLIKDDKIEELKVKLEQIEQAAQAFAQYSAQQAATENSKDSDTVEAEIVDDKAN.

Position 187 is a phosphothreonine; by autocatalysis (Thr-187). The segment at 575–599 (AQQAATENSKDSDTVEAEIVDDKAN) is disordered.

Belongs to the heat shock protein 70 family.

In terms of biological role, acts as a chaperone. The sequence is that of Chaperone protein DnaK from Mycoplasmopsis pulmonis (strain UAB CTIP) (Mycoplasma pulmonis).